Consider the following 75-residue polypeptide: Small ribosomal subunit protein bS18 (75 aa).

This sequence belongs to the bacterial ribosomal protein bS18 family. In terms of assembly, part of the 30S ribosomal subunit. Forms a tight heterodimer with protein bS6.

Its function is as follows. Binds as a heterodimer with protein bS6 to the central domain of the 16S rRNA, where it helps stabilize the platform of the 30S subunit. The sequence is that of Small ribosomal subunit protein bS18 from Cereibacter sphaeroides (strain ATCC 17029 / ATH 2.4.9) (Rhodobacter sphaeroides).